The following is a 424-amino-acid chain: O-seryl-dTMP PLP-dependent decarboxylase (424 aa).

Belongs to the pyridoxal-phosphate-dependent aminodecarboxylase family.

It catalyses the reaction 5-O-(L-seryl)-dTMP in DNA + H(+) = 5-aminoethoxy-methyl-dUMP in DNA + CO2. Its function is as follows. Converts 5-O-serinylthymidine (O-SerT) into 5-aminoethoxy-2'-deoxymethyluridine (5-NeOmdU) as a step in the pathway leading to thymidine hypermodifications in the viral genome. As a final result of the pathway of hypermodification, 5-NeOmdU substitutes for about 40% of the thymidines in the viral DNA. These modifications probably prevent degradation of viral genome by the host restriction-modification antiviral defense system. The chain is O-seryl-dTMP PLP-dependent decarboxylase from Salmonella phage ViI.